Reading from the N-terminus, the 489-residue chain is Dipeptide and tripeptide permease B (489 aa).

At 1–27 (MNKPASIGLLQQPKPFFMIFFVELWER) the chain is on the cytoplasmic side. A helical transmembrane segment spans residues 28-48 (FGYYGVQGILAVYFVHKLGFS). Residues 49 to 52 (QEQA) lie on the Periplasmic side of the membrane. The chain crosses the membrane as a helical span at residues 53-73 (FTTFGAFAALVYGLIAIGGYV). The Cytoplasmic portion of the chain corresponds to 74–82 (GDHLLGTKR). A helical membrane pass occupies residues 83–103 (TIVLGAIVLTVGYFMTGLSIL). Residues 104–106 (KPE) are Periplasmic-facing. The helical transmembrane segment at 107 to 127 (LIFYALGTIAVGNGLFKANPA) threads the bilayer. The Cytoplasmic portion of the chain corresponds to 128 to 146 (SLLSKCYPPKDPRLDGAFT). Residues 147 to 167 (LFYMSINIGSLFSLAIAPVIA) form a helical membrane-spanning segment. Over 168 to 171 (EKFG) the chain is Periplasmic. The chain crosses the membrane as a helical span at residues 172–192 (YAVTYNICGIGLIIALLVYVL). Over 193 to 212 (YRNTVRNIGSEPDHRPINYK) the chain is Cytoplasmic. 2 helical membrane passes run 213–233 (NLLL…WLMH) and 234–254 (NVKI…FIFF). Residues 255 to 267 (REAFKQDKVGRNK) are Cytoplasmic-facing. Residues 268-288 (MFVAFILMLQAIVFFILYAQM) form a helical membrane-spanning segment. At 289-311 (PTSLNFFAINNVHHQLLGFNINP) the chain is on the periplasmic side. The helical transmembrane segment at 312–332 (VSFQALNPFWIVVASPILAAL) threads the bilayer. The Cytoplasmic segment spans residues 333-350 (YTHWGSRSKDLTMPAKFT). Residues 351 to 371 (VGMFLCSLGFLTAAAAGLWFA) form a helical membrane-spanning segment. At 372–375 (DEQG) the chain is on the periplasmic side. Residues 376–396 (LTSPWFIVLVYLFQSLGELMI) form a helical membrane-spanning segment. The Cytoplasmic segment spans residues 397-419 (SALGLAMVAALVPQYLMGFILGM). A helical transmembrane segment spans residues 420 to 440 (WYLTQATSFLLGGYVAAFTAI). Residues 441–456 (PEGITDPLETLPVYTN) are Periplasmic-facing. A helical transmembrane segment spans residues 457–477 (VFGKIGITTFIVAIIMAITVP). Topologically, residues 478–489 (LLNRMMNGKQKA) are cytoplasmic.

The protein belongs to the major facilitator superfamily. Proton-dependent oligopeptide transporter (POT/PTR) (TC 2.A.17) family. DtpB subfamily.

It is found in the cell inner membrane. Proton-dependent permease that transports di- and tripeptides. The chain is Dipeptide and tripeptide permease B from Photorhabdus asymbiotica subsp. asymbiotica (strain ATCC 43949 / 3105-77) (Xenorhabdus luminescens (strain 2)).